Reading from the N-terminus, the 291-residue chain is Proline iminopeptidase (291 aa).

One can recognise an AB hydrolase-1 domain in the interval 30–274 (LLIHGGPGSS…ANSRHLALLD (245 aa)). Ser-103 acts as the Nucleophile in catalysis. Residue Asp-242 is part of the active site. His-269 serves as the catalytic Proton donor.

The protein belongs to the peptidase S33 family.

It is found in the cell envelope. It catalyses the reaction Release of N-terminal proline from a peptide.. Functionally, releases the N-terminal proline from various substrates. This Lacticaseibacillus rhamnosus (strain Lc 705) (Lactobacillus rhamnosus) protein is Proline iminopeptidase.